A 359-amino-acid chain; its full sequence is Probable dual-specificity RNA methyltransferase RlmN (359 aa).

The active-site Proton acceptor is E91. Positions 97–329 (QHYGHSVCVT…KKNGVNCVVR (233 aa)) constitute a Radical SAM core domain. Residues C104 and C340 are joined by a disulfide bond. [4Fe-4S] cluster contacts are provided by C111, C115, and C118. S-adenosyl-L-methionine-binding positions include 163-164 (GE), S195, 218-220 (SLH), and N296. C340 (S-methylcysteine intermediate) is an active-site residue.

Belongs to the radical SAM superfamily. RlmN family. Requires [4Fe-4S] cluster as cofactor.

The protein resides in the cytoplasm. It carries out the reaction adenosine(2503) in 23S rRNA + 2 reduced [2Fe-2S]-[ferredoxin] + 2 S-adenosyl-L-methionine = 2-methyladenosine(2503) in 23S rRNA + 5'-deoxyadenosine + L-methionine + 2 oxidized [2Fe-2S]-[ferredoxin] + S-adenosyl-L-homocysteine. The enzyme catalyses adenosine(37) in tRNA + 2 reduced [2Fe-2S]-[ferredoxin] + 2 S-adenosyl-L-methionine = 2-methyladenosine(37) in tRNA + 5'-deoxyadenosine + L-methionine + 2 oxidized [2Fe-2S]-[ferredoxin] + S-adenosyl-L-homocysteine. Its function is as follows. Specifically methylates position 2 of adenine 2503 in 23S rRNA and position 2 of adenine 37 in tRNAs. This is Probable dual-specificity RNA methyltransferase RlmN from Streptococcus pyogenes serotype M18 (strain MGAS8232).